The primary structure comprises 192 residues: Probable GTP-binding protein EngB (192 aa).

The EngB-type G domain occupies 22–192 (SLPEIVFVGR…LLEQLENYTG (171 aa)). Residues 30 to 37 (GRSNVGKS), 57 to 61 (GKTQL), 75 to 78 (DLPG), 142 to 145 (TKYD), and 172 to 174 (YSA) contribute to the GTP site. Residues Ser-37 and Thr-59 each contribute to the Mg(2+) site.

This sequence belongs to the TRAFAC class TrmE-Era-EngA-EngB-Septin-like GTPase superfamily. EngB GTPase family. Requires Mg(2+) as cofactor.

In terms of biological role, necessary for normal cell division and for the maintenance of normal septation. The chain is Probable GTP-binding protein EngB from Prosthecochloris aestuarii (strain DSM 271 / SK 413).